A 351-amino-acid polypeptide reads, in one-letter code: Hydroxymethylglutaryl-CoA synthase (351 aa).

Glu-80 functions as the Proton donor/acceptor in the catalytic mechanism. Cys-112 functions as the Acyl-thioester intermediate in the catalytic mechanism. (3S)-3-hydroxy-3-methylglutaryl-CoA-binding residues include Cys-112 and Ser-153. Arg-199 contributes to the CoA binding site. Residues Thr-201 and His-234 each contribute to the (3S)-3-hydroxy-3-methylglutaryl-CoA site. His-234 serves as the catalytic Proton donor/acceptor. Lys-239 serves as a coordination point for CoA. (3S)-3-hydroxy-3-methylglutaryl-CoA-binding residues include Arg-243, Asn-266, and Ser-296.

This sequence belongs to the thiolase-like superfamily. Archaeal HMG-CoA synthase family. Interacts with acetoacetyl-CoA thiolase that catalyzes the precedent step in the pathway and with a DUF35 protein. The acetoacetyl-CoA thiolase/HMG-CoA synthase complex channels the intermediate via a fused CoA-binding site, which allows for efficient coupling of the endergonic thiolase reaction with the exergonic HMGCS reaction.

The enzyme catalyses acetoacetyl-CoA + acetyl-CoA + H2O = (3S)-3-hydroxy-3-methylglutaryl-CoA + CoA + H(+). The protein operates within metabolic intermediate biosynthesis; (R)-mevalonate biosynthesis; (R)-mevalonate from acetyl-CoA: step 2/3. Its function is as follows. Catalyzes the condensation of acetyl-CoA with acetoacetyl-CoA to form 3-hydroxy-3-methylglutaryl-CoA (HMG-CoA). Functions in the mevalonate (MVA) pathway leading to isopentenyl diphosphate (IPP), a key precursor for the biosynthesis of isoprenoid compounds that are building blocks of archaeal membrane lipids. This Thermoplasma volcanium (strain ATCC 51530 / DSM 4299 / JCM 9571 / NBRC 15438 / GSS1) protein is Hydroxymethylglutaryl-CoA synthase.